The sequence spans 508 residues: Aromatase (508 aa).

Heme is bound at residue Cys437.

The protein belongs to the cytochrome P450 family. Heme is required as a cofactor.

The protein localises to the membrane. It catalyses the reaction testosterone + 3 reduced [NADPH--hemoprotein reductase] + 3 O2 = 17beta-estradiol + formate + 3 oxidized [NADPH--hemoprotein reductase] + 4 H2O + 4 H(+). The enzyme catalyses androst-4-ene-3,17-dione + 3 reduced [NADPH--hemoprotein reductase] + 3 O2 = estrone + formate + 3 oxidized [NADPH--hemoprotein reductase] + 4 H2O + 4 H(+). In terms of biological role, catalyzes the formation of aromatic C18 estrogens from C19 androgens. The protein is Aromatase (Cyp19a1) of Rattus norvegicus (Rat).